The chain runs to 108 residues: Ribonuclease P protein component (108 aa).

This sequence belongs to the RnpA family. Consists of a catalytic RNA component (M1 or rnpB) and a protein subunit.

It carries out the reaction Endonucleolytic cleavage of RNA, removing 5'-extranucleotides from tRNA precursor.. RNaseP catalyzes the removal of the 5'-leader sequence from pre-tRNA to produce the mature 5'-terminus. It can also cleave other RNA substrates such as 4.5S RNA. The protein component plays an auxiliary but essential role in vivo by binding to the 5'-leader sequence and broadening the substrate specificity of the ribozyme. The chain is Ribonuclease P protein component from Campylobacter jejuni subsp. doylei (strain ATCC BAA-1458 / RM4099 / 269.97).